Reading from the N-terminus, the 338-residue chain is Aspartate-semialdehyde dehydrogenase (338 aa).

Residues 13–16 (TGAV) and 41–42 (RS) contribute to the NADP(+) site. Residue R101 participates in phosphate binding. C130 (acyl-thioester intermediate) is an active-site residue. Q157 serves as a coordination point for substrate. Residue 160–161 (SG) participates in NADP(+) binding. Residue K214 participates in phosphate binding. R236 is a substrate binding site. The active-site Proton acceptor is the H243. Position 316 (Q316) interacts with NADP(+).

This sequence belongs to the aspartate-semialdehyde dehydrogenase family. Homodimer.

It catalyses the reaction L-aspartate 4-semialdehyde + phosphate + NADP(+) = 4-phospho-L-aspartate + NADPH + H(+). It participates in amino-acid biosynthesis; L-lysine biosynthesis via DAP pathway; (S)-tetrahydrodipicolinate from L-aspartate: step 2/4. It functions in the pathway amino-acid biosynthesis; L-methionine biosynthesis via de novo pathway; L-homoserine from L-aspartate: step 2/3. The protein operates within amino-acid biosynthesis; L-threonine biosynthesis; L-threonine from L-aspartate: step 2/5. Catalyzes the NADPH-dependent formation of L-aspartate-semialdehyde (L-ASA) by the reductive dephosphorylation of L-aspartyl-4-phosphate. This Synechocystis sp. (strain ATCC 27184 / PCC 6803 / Kazusa) protein is Aspartate-semialdehyde dehydrogenase (asd).